Reading from the N-terminus, the 105-residue chain is MHVVELRSTNHKDIDADFVLNAKQTYIESVLNIRKMIVNAKTEDDLHGAKIEIAALLKDLNRVLLGGDGLKRSIENNPHFRSLIHFVKNLKRHIAIEFEEFIYQP.

This is an uncharacterized protein from Bacillus phage SPbeta (Bacillus phage SPBc2).